The following is a 1704-amino-acid chain: Arf-GAP with Rho-GAP domain, ANK repeat and PH domain-containing protein 2 (1704 aa).

Residues 6–70 form the SAM domain; it reads EVNVDIKDFL…LKQLQIILSK (65 aa). Tyr-77 carries the phosphotyrosine modification. Residues 126–161 are disordered; sequence NLEDSDASVERSQYPQSDDKLSPPKRDFPTAEEPHL. Basic and acidic residues predominate over residues 142–160; sequence SDDKLSPPKRDFPTAEEPH. PH domains are found at residues 482–574 and 587–679; these read KKVK…NALK and TPEK…QSIA. Residues 676–811 enclose the Arf-GAP domain; the sequence is QSIAETLSDY…TLLASLTKEE (136 aa). A C4-type zinc finger spans residues 700–723; sequence CADCKAPDPDWASINLCVVICKKC. 2 PH domains span residues 878-1003 and 1014-1114; these read DIHS…KHFV and DYDL…AGTD. The Rho-GAP domain maps to 1116 to 1297; it reads NALQDQQLSK…DLINNYVEIF (182 aa). The Ras-associating domain maps to 1326 to 1420; the sequence is GDLLIEVYVE…AYLVVKRFLT (95 aa). The PH 5 domain maps to 1434–1537; the sequence is GSIKEGILKI…WMTSIFIAQH (104 aa). Ser-1632 carries the phosphoserine modification. Positions 1636–1675 are disordered; it reads LEDTEPEAPLGQPKGHKGLKTLRKTEDRNSKATLDSDHKL. Positions 1658–1675 are enriched in basic and acidic residues; the sequence is RKTEDRNSKATLDSDHKL.

As to expression, detected in brain, thymus, lymph node, thyroid, spinal cord, trachea, heart, skeletal muscle, spleen, kidney, liver, placenta, lung and peripheral blood leukocytes.

Its subcellular location is the cytoplasm. Phosphatidylinositol 3,4,5-trisphosphate-dependent GTPase-activating protein that modulates actin cytoskeleton remodeling by regulating ARF and RHO family members. Is activated by phosphatidylinositol 3,4,5-trisphosphate (PtdIns(3,4,5)P3) binding. Can be activated by phosphatidylinositol 3,4-bisphosphate (PtdIns(3,4,5)P2) binding, albeit with lower efficiency. The sequence is that of Arf-GAP with Rho-GAP domain, ANK repeat and PH domain-containing protein 2 (ARAP2) from Homo sapiens (Human).